The following is a 473-amino-acid chain: uncharacterized protein (473 aa).

The N-terminal stretch at 1-19 (MIRAFLVFPYLYILVQSNG) is a signal peptide.

This is an uncharacterized protein from Methanocaldococcus jannaschii (strain ATCC 43067 / DSM 2661 / JAL-1 / JCM 10045 / NBRC 100440) (Methanococcus jannaschii).